The sequence spans 248 residues: Tyrosine recombinase XerD-like (248 aa).

The Core-binding (CB) domain maps to 1-72 (MKSYIEPFIA…TANQFLYYLY (72 aa)). The region spanning 85 to 248 (DTMKVMRTEK…PVTLEKYYKS (164 aa)) is the Tyr recombinase domain. Residues Lys-149 and Arg-213 contribute to the active site. Catalysis depends on Tyr-245, which acts as the O-(3'-phospho-DNA)-tyrosine intermediate.

It belongs to the 'phage' integrase family. XerD-like subfamily.

It localises to the cytoplasm. Its function is as follows. Putative tyrosine recombinase. Not involved in the cutting and rejoining of the recombining DNA molecules on dif(SL) site. The polypeptide is Tyrosine recombinase XerD-like (Streptococcus pyogenes serotype M28 (strain MGAS6180)).